We begin with the raw amino-acid sequence, 393 residues long: PPE family protein PPE26 (393 aa).

It belongs to the mycobacterial PPE family. As to quaternary structure, interacts with human TLR2.

In terms of biological role, probably plays a key role in regulating innate and adaptive immune responses through human Toll-like receptor 2 (TLR2). Interacts with TLR2, leading to the subsequent activation of the mitogen-activated protein kinase (MAPK) and nuclear factor kappa B (NF-kappa-B) signaling pathways. Stimulates macrophage activation by augmenting pro-inflammatory cytokine production (TNF-alpha, IL-6 and IL-12p40) and the expression of cell surface molecules (CD80, CD86, MHC class I and II). Also participates in adaptive immunity by directing Th1-polarised immune responses. The polypeptide is PPE family protein PPE26 (Mycobacterium tuberculosis (strain ATCC 25618 / H37Rv)).